Consider the following 156-residue polypeptide: Glutamine--fructose-6-phosphate aminotransferase [isomerizing] (156 aa).

One can recognise an SIS domain in the interval 4 to 146 (MAHHIVPARD…VLKGTDVDQP (143 aa)). The For Fru-6P isomerization activity role is filled by lysine 151.

In terms of assembly, homodimer.

The protein resides in the cytoplasm. The catalysed reaction is D-fructose 6-phosphate + L-glutamine = D-glucosamine 6-phosphate + L-glutamate. Catalyzes the first step in hexosamine metabolism, converting fructose-6P into glucosamine-6P using glutamine as a nitrogen source. This chain is Glutamine--fructose-6-phosphate aminotransferase [isomerizing] (glmS), found in Sphingobium yanoikuyae (Sphingomonas yanoikuyae).